The following is a 450-amino-acid chain: Phosphoglucosamine mutase (450 aa).

Serine 107 serves as the catalytic Phosphoserine intermediate. Mg(2+)-binding residues include serine 107, aspartate 246, aspartate 248, and aspartate 250. Phosphoserine is present on serine 107.

It belongs to the phosphohexose mutase family. The cofactor is Mg(2+). Activated by phosphorylation.

It carries out the reaction alpha-D-glucosamine 1-phosphate = D-glucosamine 6-phosphate. Functionally, catalyzes the conversion of glucosamine-6-phosphate to glucosamine-1-phosphate. The chain is Phosphoglucosamine mutase from Dechloromonas aromatica (strain RCB).